The sequence spans 132 residues: uncharacterized protein (132 aa).

Residues 1 to 18 (MRKIISMLFIPLFIFAMA) form the signal peptide.

This is an uncharacterized protein from Aquifex aeolicus (strain VF5).